A 387-amino-acid polypeptide reads, in one-letter code: MEQVVIVDAIRTPMSRSKGGAFRNVRAEDLSAHLMRSLLARNPALEAAALDDIYWGCVQQTLEQGFNIARNAALLAEVPHSVPAVTVNRLCGSSMQALHDAARMIMSGDAQACLVGGVEHMGHVPMSHGVDFHPGLSRNVAKAAGMMGLTAEMLARMHGISREMQDAFAARSHARAWAATQSGAFKNEIIPTGGHDADGVLKQFNYDEVIRPETTVEALATLRPAFDPVSGTVTAGTSSALSDGAAAMLVMSESRAHELGLKPRARVRSMAVVGCDPAIMGYGPVPASKLALKKAGLSVSDIGVFEMNEAFAAQILPCIKDLGLIEQIDEKINLNGGAIALGHPLGCSGARISTTLLNLMERKDVQFGLATMCIGLGQGIATVFERV.

The active-site Acyl-thioester intermediate is C91. Active-site proton acceptor residues include H343 and C373.

Belongs to the thiolase-like superfamily. Thiolase family. In terms of assembly, heterotetramer of two alpha chains (FadB) and two beta chains (FadA).

It localises to the cytoplasm. It carries out the reaction an acyl-CoA + acetyl-CoA = a 3-oxoacyl-CoA + CoA. It functions in the pathway lipid metabolism; fatty acid beta-oxidation. Catalyzes the final step of fatty acid oxidation in which acetyl-CoA is released and the CoA ester of a fatty acid two carbons shorter is formed. This is 3-ketoacyl-CoA thiolase from Escherichia coli O139:H28 (strain E24377A / ETEC).